Consider the following 1125-residue polypeptide: Telomerase reverse transcriptase (1125 aa).

The tract at residues 1 to 239 (MPRAPRCPAV…TKRLLSLTST (239 aa)) is RNA-interacting domain 1. The interval 58 to 205 (VPWGSQPPPA…RPVGGNFTNL (148 aa)) is GQ motif. The segment at 137-141 (WMLLL) is required for regulating specificity for telomeric DNA and for processivity for primer elongation. A compositionally biased stretch (polar residues) spans 206-216 (GSAHQIKNSGH). A disordered region spans residues 206 to 304 (GSAHQIKNSG…ASDPSLSGSV (99 aa)). A linker region spans residues 240–328 (NVPSAKKARF…PPQDAEKLRP (89 aa)). Basic and acidic residues predominate over residues 247 to 259 (ARFEPALRVDKGP). The span at 273-287 (APSPAASPKVPPAAK) shows a compositional bias: low complexity. The segment at 306-528 (CKHKPSSSSL…VPAAEHRLRE (223 aa)) is required for oligomerization. The segment at 329–540 (FTETRHFLYS…LAMFLFWLMD (212 aa)) is RNA-interacting domain 2. The short motif at 332-337 (TRHFLY) is the TFLY; involved in RNA binding element. The interval 381–511 (FCRTRRLPRR…VKVEDCHWLR (131 aa)) is QFP motif. The segment at 402–422 (LMNHAKCQYVRFLRSHCRFRT) is CP motif. The residue at position 447 (S447) is a Phosphoserine; by DYRK2. The Reverse transcriptase domain maps to 595–928 (EVKHHQDTWL…CLFPWCGLLL (334 aa)). Residue Y697 is modified to Phosphotyrosine; by SRC-type Tyr-kinases. Positions 702, 861, and 862 each coordinate Mg(2+). Positions 907–921 (LGGAAPHQLPAHCLF) are required for oligomerization. Residues 923-927 (WCGLL) are primer grip sequence. A CTE region spans residues 929-1125 (DTRTLEVFCD…LSTDFQTILD (197 aa)).

This sequence belongs to the reverse transcriptase family. Telomerase subfamily. As to quaternary structure, catalytic component of the telomerase holoenzyme complex composed of one molecule of TERT, one molecule of WRAP53/TCAB1, two molecules of H/ACA ribonucleoprotein complex subunits DKC1, NOP10, NHP2 and GAR1, and a telomerase RNA template component (TERC). The telomerase holoenzyme complex is associated with TEP1, SMG6/EST1A and POT1. The molecular chaperone HSP90/P23 complex is required for correct assembly and stabilization of the active telomerase. Interacts directly with HSP90A and PTGES3. Interacts with HSPA1A; the interaction occurs in the absence of TERC and dissociates once the complex has formed. Interacts with RAN; the interaction promotes nuclear export of TERT. Interacts with XPO1. Interacts with PTPN11; the interaction retains TERT in the nucleus. Interacts with NCL (via RRM1 and C-terminal RRM4/Arg/Gly-rich domains); the interaction is important for nucleolar localization of TERT. Interacts with SMARCA4 (via the bromodomain); the interaction regulates Wnt-mediated signaling. Interacts with MCRS1 (isoform MCRS2); the interaction inhibits in vitro telomerase activity. Interacts with PIF1; the interaction has no effect on the elongation activity of TERT. Interacts with PML; the interaction recruits TERT to PML bodies and inhibits telomerase activity. Interacts with GNL3L. Interacts with isoform 1 and isoform 2 of NVL. Interacts with DHX36. Interacts with ATF7. In terms of processing, phosphorylation at Tyr-697 under oxidative stress leads to translocation of TERT to the cytoplasm and reduces its antiapoptotic activity. Dephosphorylated by SHP2/PTPN11 leading to nuclear retention. Phosphorylation at the G2/M phase at Ser-447 by DYRK2 promotes ubiquitination by the EDVP complex and degradation. Ubiquitinated by the EDVP complex, a E3 ligase complex following phosphorylation at Ser-447 by DYRK2. Ubiquitinated leads to proteasomal degradation. As to expression, isoform 1 and isoform 2 expressed in thymus, liver, spleen, lung, kidney and testis. High level of inactive isoform 3 in adult hippocampus, low level in heart, cortex and cerebellum.

It localises to the nucleus. It is found in the nucleolus. The protein resides in the nucleoplasm. The protein localises to the chromosome. Its subcellular location is the telomere. It localises to the cytoplasm. It is found in the PML body. It carries out the reaction DNA(n) + a 2'-deoxyribonucleoside 5'-triphosphate = DNA(n+1) + diphosphate. Its function is as follows. Telomerase is a ribonucleoprotein enzyme essential for the replication of chromosome termini in most eukaryotes. Active in progenitor and cancer cells. Inactive, or very low activity, in normal somatic cells. Catalytic component of the teleromerase holoenzyme complex whose main activity is the elongation of telomeres by acting as a reverse transcriptase that adds simple sequence repeats to chromosome ends by copying a template sequence within the RNA component of the enzyme. Catalyzes the RNA-dependent extension of 3'-chromosomal termini with the 6-nucleotide telomeric repeat unit, 5'-TTAGGG-3'. The catalytic cycle involves primer binding, primer extension and release of product once the template boundary has been reached or nascent product translocation followed by further extension. More active on substrates containing 2 or 3 telomeric repeats. Telomerase activity is regulated by a number of factors including telomerase complex-associated proteins, chaperones and polypeptide modifiers. Modulates Wnt signaling. Plays important roles in aging and antiapoptosis. In Rattus norvegicus (Rat), this protein is Telomerase reverse transcriptase.